A 568-amino-acid chain; its full sequence is Phosphoprotein (568 aa).

The segment at 1 to 25 (MDQDAFFSERDPEAEGETPRKQESL) is disordered. Residues 7–24 (FSERDPEAEGETPRKQES) are compositionally biased toward basic and acidic residues. The tract at residues 33 to 41 (DVVLSYKPT) is N0 binding. A disordered region spans residues 55–322 (DNSKENKPSC…TTANEEGTSN (268 aa)). Basic and acidic residues-rich tracts occupy residues 56 to 105 (NSKE…HARI), 132 to 144 (RNTR…PNER), 151 to 167 (PTDE…KREE), and 175 to 190 (EEVR…REGR). Residues 191–216 (TNNNGRSMETSSTHSTRITDVITNPS) show a composition bias toward polar residues. Positions 239–265 (TRSERTQNSELHKSTSEDSSNLEDHNT) are enriched in basic and acidic residues. Residues 294–304 (YTTNNANNNTK) show a composition bias toward low complexity. Residues 344–411 (FELSRSASHV…SSRDLHKRFS (68 aa)) form a multimerization region. The stretch at 387–416 (EENRTLLKQIQEEIDSSRDLHKRFSEYQKE) forms a coiled coil. The interval 412–445 (EYQKEQNSLMMANLSTLHIITDRGGKTGDPSDTT) is l protein binding. Disordered stretches follow at residues 434-455 (RGGK…TKGK) and 494-513 (VLEE…LIPS). Over residues 441–450 (PSDTTRSPSV) the composition is skewed to polar residues. The interval 479 to 568 (DLIREDELRD…FEEDIDSLTN (90 aa)) is interaction with the nucleocapsid (N-RNA).

This sequence belongs to the respirovirus P protein family. As to quaternary structure, homotetramer. Interacts (via multimerization domain) with polymerase L; this interaction forms the polymerase complex. Interacts (via N-terminus) with N0; this interaction allows P to chaperon N0 before encapsidation and form the N-P complex. Interacts (via C-terminus) with N-RNA template; this interaction positions the polymerase on the template.

Essential cofactor of the RNA polymerase L that plays a central role in the transcription and replication by forming the polymerase complex with RNA polymerase L and recruiting L to the genomic N-RNA template for RNA synthesis. Also plays a central role in the encapsidation of nascent RNA chains by forming the encapsidation complex with the nucleocapsid protein N (N-P complex). Acts as a chaperone for newly synthesized free N protein, so-called N0, allowing encapsidation of nascent RNA chains during replication. The nucleoprotein protein N prevents excessive phosphorylation of P, which leads to down-regulation of viral transcription/ replication. Participates, together with N, in the formation of viral factories (viroplasms), which are large inclusions in the host cytoplasm where replication takes place. Recruits host PI4KB and remodel the host endoplasmic reticulum membrane to form viral replication factories. The chain is Phosphoprotein (P/C) from Human parainfluenza 1 virus (strain CI-5/73) (HPIV-1).